Here is a 419-residue protein sequence, read N- to C-terminus: Copalyl diphosphate synthase 2, chloroplastic (419 aa).

Lys-82 contributes to the substrate binding site.

It belongs to the terpene synthase family. Tpsc subfamily. Mg(2+) is required as a cofactor. Ubiquitous expression in roots, stems, leaves and flowers.

The protein resides in the plastid. It is found in the chloroplast. The catalysed reaction is (2E,6E,10E)-geranylgeranyl diphosphate = (+)-copalyl diphosphate. It participates in secondary metabolite biosynthesis; terpenoid biosynthesis. Functionally, involved in the biosynthesis of ent-kaurene diterpenoids natural products such as oridonin, miltiradiene, eriocalyxin B and nezukol, known to exhibit antitumor, anti-inflammatory and antibacterial activities. Catalyzes the conversion of (2E,6E,10E)-geranylgeranyl diphosphate (GGPP) to (+)-copalyl diphosphate ((+)-CPP). In Isodon rubescens (Rabdosia rubescens), this protein is Copalyl diphosphate synthase 2, chloroplastic.